Reading from the N-terminus, the 149-residue chain is MADQLTEEQIAEFKEAFSLFDKDGDGTITTKELGTVMRSLGQNPTEAELQDMINEVNADGNGTIDFPEFLTMMARKMKDTDSEEEIREAFRVFDKDGNGYISAAELRHVMTNLGEKLTDEEVDEMIREADIDGDGQVNYEEFVQMMTAK.

A2 is modified (N-acetylalanine). EF-hand domains lie at 8–43 (EQIA…LGQN), 44–79 (PTEA…KMKD), 81–116 (DSEE…LGEK), and 117–149 (LTDE…MTAK). D21, D23, D25, T27, E32, D59, N61, T63, E68, D94, D96, N98, Y100, and E105 together coordinate Ca(2+). N6,N6,N6-trimethyllysine is present on K116. 5 residues coordinate Ca(2+): D130, D132, D134, Q136, and E141.

It belongs to the calmodulin family.

Calmodulin acts as part of a calcium signal transduction pathway by mediating the control of a large number of enzymes, ion channels, aquaporins and other proteins through calcium-binding. Calcium-binding is required for the activation of calmodulin. Among the enzymes to be stimulated by the calmodulin-calcium complex are a number of protein kinases, such as myosin light-chain kinases and calmodulin-dependent protein kinase type II (CaMK2), and phosphatases. This Myxine glutinosa (Atlantic hagfish) protein is Calmodulin.